Here is a 782-residue protein sequence, read N- to C-terminus: Zinc finger protein 786 (782 aa).

Residues 9-80 (LTFEDVAIYF…WRESQKSGNI (72 aa)) form the KRAB domain. Positions 141 to 164 (PQRHDARAPPPLACGPSESTLKEG) are disordered. Residues 192–209 (CGESCWENNHLVMHQRGH) form a C2H2-type 1; degenerate zinc finger. Residues 240 to 262 (FRCGVCGKSFRRKLCLLRHLAAH) form a C2H2-type 2 zinc finger. Residues 285-364 (SHRLPQQGEK…EGDTEALQHG (80 aa)) form a disordered region. Residues 369 to 391 (CSCSECGERSPMSARLASPCRAH) form a C2H2-type 3; degenerate zinc finger. 3 C2H2-type zinc fingers span residues 397-419 (FQCA…QHAH), 425-447 (FSCR…IRVH), and 453-475 (FRCA…QRLH). The segment at 481–503 (FQCPECGLSFRLESMLRAHRLRH) adopts a C2H2-type 7; degenerate zinc-finger fold. C2H2-type zinc fingers lie at residues 509–531 (FSCS…LRVH), 537–559 (FQCL…QHTH), 565–587 (FSCG…LRVH), 593–615 (FQCP…QRLH), 621–643 (FQCP…QLLH), 649–670 (FSCE…IRTH), 676–698 (FQCP…QGLH), 704–726 (FHCP…QRIH), and 732–754 (FACG…IRVH).

This sequence belongs to the krueppel C2H2-type zinc-finger protein family.

The protein resides in the nucleus. Functionally, may be involved in transcriptional regulation. The sequence is that of Zinc finger protein 786 (ZNF786) from Homo sapiens (Human).